The primary structure comprises 66 residues: Large ribosomal subunit protein bL35 (66 aa).

Basic residues predominate over residues 1–16 (MPKQKTHRASAKRFKR). The tract at residues 1–20 (MPKQKTHRASAKRFKRTGNG) is disordered.

This sequence belongs to the bacterial ribosomal protein bL35 family.

The chain is Large ribosomal subunit protein bL35 from Lactococcus lactis subsp. lactis (strain IL1403) (Streptococcus lactis).